Consider the following 189-residue polypeptide: Accessory gene regulator protein B (189 aa).

5 helical membrane-spanning segments follow: residues 49-69, 81-100, 110-130, 143-163, and 164-184; these read IAYI…FYLI, SFWC…LVIV, IILT…ATKK, YYAI…KEPF, and AQFI…IFFI.

Belongs to the AgrB family.

It localises to the cell membrane. In terms of biological role, essential for the production of a quorum sensing system signal molecule, the autoinducing peptide (AIP). This quorum sensing system is responsible for the regulation of the expression of virulence factor genes. Involved in the proteolytic processing of AgrD, the precursor of AIP. The polypeptide is Accessory gene regulator protein B (Staphylococcus aureus (strain COL)).